The primary structure comprises 293 residues: uncharacterized protein (293 aa).

A disordered region spans residues 1 to 22 (MTFNEGVQIDTSTTSTSGSGGG). The helical transmembrane segment at 25–45 (LAIGGGLGGLLVVVVAMLLGV) threads the bilayer. Residues 243–265 (GDDRIQQQTTGRTNPETWTHGSA) form a disordered region. Residues 248 to 265 (QQQTTGRTNPETWTHGSA) show a composition bias toward polar residues.

The protein resides in the membrane. This is an uncharacterized protein from Mycobacterium tuberculosis (strain CDC 1551 / Oshkosh).